Here is a 667-residue protein sequence, read N- to C-terminus: UvrABC system protein B (667 aa).

The Helicase ATP-binding domain occupies 25-180 (DSLQNQHRFQ…LLRALVSVQY (156 aa)). Position 38 to 45 (38 to 45 (GATGTGKT)) interacts with ATP. The Beta-hairpin motif lies at 91-114 (YYDYYQPEAYIPVSDTYIEKSSSI). Positions 429-595 (QVDDLLGEIK…PIVKRSSNSI (167 aa)) constitute a Helicase C-terminal domain. One can recognise a UVR domain in the interval 626-661 (PELIQQLEAQMKEAAKNLEFESAAKYRDRIKQLRDK).

It belongs to the UvrB family. Forms a heterotetramer with UvrA during the search for lesions. Interacts with UvrC in an incision complex.

The protein localises to the cytoplasm. In terms of biological role, the UvrABC repair system catalyzes the recognition and processing of DNA lesions. A damage recognition complex composed of 2 UvrA and 2 UvrB subunits scans DNA for abnormalities. Upon binding of the UvrA(2)B(2) complex to a putative damaged site, the DNA wraps around one UvrB monomer. DNA wrap is dependent on ATP binding by UvrB and probably causes local melting of the DNA helix, facilitating insertion of UvrB beta-hairpin between the DNA strands. Then UvrB probes one DNA strand for the presence of a lesion. If a lesion is found the UvrA subunits dissociate and the UvrB-DNA preincision complex is formed. This complex is subsequently bound by UvrC and the second UvrB is released. If no lesion is found, the DNA wraps around the other UvrB subunit that will check the other stand for damage. In Microcystis aeruginosa (strain NIES-843 / IAM M-2473), this protein is UvrABC system protein B.